Consider the following 76-residue polypeptide: MSVEEKVKKIIMDQLGVSAEEVKPEASFVEDLGADSLDLTELIMAMEEEFGVEIDDDDAQKILKVKDAIDYVSNKQ.

The Carrier domain occupies 1–76; that stretch reads MSVEEKVKKI…DAIDYVSNKQ (76 aa). O-(pantetheine 4'-phosphoryl)serine is present on serine 36.

This sequence belongs to the acyl carrier protein (ACP) family. 4'-phosphopantetheine is transferred from CoA to a specific serine of apo-ACP by AcpS. This modification is essential for activity because fatty acids are bound in thioester linkage to the sulfhydryl of the prosthetic group.

It is found in the cytoplasm. It functions in the pathway lipid metabolism; fatty acid biosynthesis. Functionally, carrier of the growing fatty acid chain in fatty acid biosynthesis. The protein is Acyl carrier protein of Nitratidesulfovibrio vulgaris (strain ATCC 29579 / DSM 644 / CCUG 34227 / NCIMB 8303 / VKM B-1760 / Hildenborough) (Desulfovibrio vulgaris).